Reading from the N-terminus, the 2697-residue chain is Target of rapamycin homolog (2697 aa).

The tract at residues 1–25 (MLQQHGISFQMNADRQNKAATTSNR) is disordered. 7 HEAT repeats span residues 235–272 (LRVN…IVSQ), 649–687 (QTIY…PFLA), 689–726 (LAQP…LNPA), 731–768 (RLRL…QSPK), 815–853 (KNLK…STAY), 863–900 (SLLD…YTHK), and 1073–1110 (KYTG…LTHC). The FAT domain maps to 1438 to 2153 (VLGRWAEQTK…IYALTVASRS (716 aa)). Disordered regions lie at residues 1945–1981 (TVIS…PQPA) and 2017–2039 (SNSS…PSNS). A compositionally biased stretch (pro residues) spans 1969 to 1981 (SPPPPAQKSPQPA). Polar residues predominate over residues 2030-2039 (PLSNDSPSNS). One can recognise a PI3K/PI4K catalytic domain in the interval 2332 to 2647 (FSSKMNVITS…TTDSIMETIK (316 aa)). Positions 2338 to 2344 (VITSKQR) are G-loop. Residues 2512–2520 (GLGDRHPSN) are catalytic loop. Residues 2532–2557 (HIDFGDCFEVAMLREKFPERVPFRLT) are activation loop. Residues 2615-2635 (DPKTRKDTGGRQNMAGAVLPS) are disordered. Positions 2665–2697 (EPLQVTEQLAMLTEQATSPLNLCQSYIGWCPFW) constitute an FATC domain.

It belongs to the PI3/PI4-kinase family. As to expression, ubiquitous. Expressed in all major tissues and organs, including the intestine, gonads and hypodermal cells. Expressed in neurons.

The protein localises to the nucleus. The enzyme catalyses L-seryl-[protein] + ATP = O-phospho-L-seryl-[protein] + ADP + H(+). The catalysed reaction is L-threonyl-[protein] + ATP = O-phospho-L-threonyl-[protein] + ADP + H(+). Functionally, serine/threonine-protein kinase that regulates the mRNA translation machinery, probably by modulating the activity of translation factors such as eIF-4G and eIF-2. It may have some protein kinase activity instead of lipid kinase activity. May play a role in P-granule degradation by autophagy in somatic cells during embryogenesis. Required, during larval development, for the establishment of the proper number of germline progenitors, probably upstream of rsks-1 and ife-1. Required for larval development. May act as a mediator of lifespan regulation by insulin signaling and nutrient sensing. The polypeptide is Target of rapamycin homolog (Caenorhabditis elegans).